The chain runs to 408 residues: Argininosuccinate synthase (408 aa).

Residues 8 to 16 and A35 contribute to the ATP site; that span reads AYSGGLDTT. Residues Y86 and S91 each contribute to the L-citrulline site. G116 contacts ATP. L-aspartate contacts are provided by T118, N122, and D123. N122 is a binding site for L-citrulline. 5 residues coordinate L-citrulline: R126, S177, S186, E263, and Y275.

It belongs to the argininosuccinate synthase family. Type 1 subfamily. As to quaternary structure, homotetramer.

The protein localises to the cytoplasm. It carries out the reaction L-citrulline + L-aspartate + ATP = 2-(N(omega)-L-arginino)succinate + AMP + diphosphate + H(+). It functions in the pathway amino-acid biosynthesis; L-arginine biosynthesis; L-arginine from L-ornithine and carbamoyl phosphate: step 2/3. The chain is Argininosuccinate synthase from Lachnospira eligens (strain ATCC 27750 / DSM 3376 / VPI C15-48 / C15-B4) (Eubacterium eligens).